Consider the following 247-residue polypeptide: Complement C1q subcomponent subunit B (247 aa).

The first 22 residues, 1–22 (MKTPRGSVLVLLLLNLLRVSWA), serve as a signal peptide directing secretion. Glutamine 23 is subject to Pyrrolidone carboxylic acid. Residues proline 29, proline 32, proline 35, proline 47, and proline 50 each carry the 4-hydroxyproline modification. Residues 30–78 (SIPGIPGIPGKPGSDGKPGTPGTKGEKGLPGLVSHLNENGEKGDPGFPG) form a disordered region. A Collagen-like domain is found at 39–98 (GKPGSDGKPGTPGTKGEKGLPGLVSHLNENGEKGDPGFPGMPGKVGPKGPIGPKGVPGPP). The segment covering 40-52 (KPGSDGKPGTPGT) has biased composition (low complexity). A 5-hydroxylysine mark is found at lysine 53 and lysine 56. Proline 59 is modified (4-hydroxyproline). Lysine 71 carries the post-translational modification 5-hydroxylysine. 4-hydroxyproline occurs at positions 77 and 80. Lysine 86 and lysine 92 each carry 5-hydroxylysine. 4-hydroxyproline occurs at positions 95 and 98. Position 104 is a 5-hydroxylysine (lysine 104). The region spanning 111–247 (KATQKIAFSA…GFMLFPDTEA (137 aa)) is the C1q domain. Cysteine 175 and cysteine 192 are disulfide-bonded. Positions 193, 194, and 200 each coordinate Ca(2+).

In terms of assembly, core component of the complement C1 complex, a calcium-dependent complex composed of 1 molecule of the C1Q subcomplex, 2 molecules of C1R and 2 molecules of C1S. The C1Q subcomplex is composed 18 subunits: 3 chains of C1QA, C1QB, and C1QC trimerize to form 6 collagen-like triple helices connected to six globular ligand-recognition modules (C1q domain). In terms of processing, hydroxylated on lysine and proline residues. Hydroxylated lysine residues can be glycosylated. Bovine C1Q contains up to 66.3 hydroxylysine-galactosylglucose residues. Total percentage hydroxylysine residues glycosylated is 92.0%. Contains no hydroxylysine-monosaccharides.

The protein resides in the secreted. Its subcellular location is the cell surface. Its activity is regulated as follows. The C1Q subcomplex is inhibited by sulfated molecules, such as triterpenoid sulfates, heparan sulfate, or chondroitin sulfates. Core component of the complement C1 complex, a multiprotein complex that initiates the classical pathway of the complement system, a cascade of proteins that leads to phagocytosis and breakdown of pathogens and signaling that strengthens the adaptive immune system. The classical complement pathway is initiated by the C1Q subcomplex of the C1 complex, which specifically binds IgG or IgM immunoglobulins complexed with antigens, forming antigen-antibody complexes on the surface of pathogens: C1QA, together with C1QB and C1QC, specifically recognizes and binds the Fc regions of IgG or IgM via its C1q domain. Immunoglobulin-binding activates the proenzyme C1R, which cleaves C1S, initiating the proteolytic cascade of the complement system. The C1Q subcomplex is activated by a hexamer of IgG complexed with antigens, while it is activated by a pentameric IgM. The C1Q subcomplex also recognizes and binds phosphatidylserine exposed on the surface of cells undergoing programmed cell death, possibly promoting activation of the complement system. The sequence is that of Complement C1q subcomponent subunit B (C1QB) from Bos taurus (Bovine).